The following is a 356-amino-acid chain: Tyrosine recombinase XerS (356 aa).

Residues 16–121 (IMPWYVLEYY…ALSSLYKYLT (106 aa)) form the Core-binding (CB) domain. In terms of domain architecture, Tyr recombinase spans 169-354 (GFLTYIDQEY…VNDEQKNALD (186 aa)). Residues Arg210, Lys234, His306, Arg309, and His332 contribute to the active site. The active-site O-(3'-phospho-DNA)-tyrosine intermediate is Tyr341.

This sequence belongs to the 'phage' integrase family. XerS subfamily.

It is found in the cytoplasm. Its activity is regulated as follows. FtsK is required for recombination. In terms of biological role, site-specific tyrosine recombinase, which acts by catalyzing the cutting and rejoining of the recombining DNA molecules. Essential to convert dimers of the bacterial chromosome into monomers to permit their segregation at cell division. In Streptococcus pneumoniae (strain Hungary19A-6), this protein is Tyrosine recombinase XerS.